The sequence spans 689 residues: Methionine--tRNA ligase (689 aa).

A 'HIGH' region motif is present at residues 15–25; the sequence is PYANGPIHLGH. Residues cysteine 146, cysteine 149, cysteine 159, and cysteine 162 each contribute to the Zn(2+) site. The 'KMSKS' region motif lies at 332–336; sequence KMSKS. ATP is bound at residue lysine 335. The tract at residues 554 to 574 is disordered; the sequence is DAPKTAAPEKTAEASSVSSEP. The tRNA-binding domain maps to 588–689; sequence DFAKIDLRIA…EGAQPGMRVK (102 aa).

Belongs to the class-I aminoacyl-tRNA synthetase family. MetG type 1 subfamily. In terms of assembly, homodimer. It depends on Zn(2+) as a cofactor.

Its subcellular location is the cytoplasm. It carries out the reaction tRNA(Met) + L-methionine + ATP = L-methionyl-tRNA(Met) + AMP + diphosphate. Functionally, is required not only for elongation of protein synthesis but also for the initiation of all mRNA translation through initiator tRNA(fMet) aminoacylation. This Shewanella baltica (strain OS185) protein is Methionine--tRNA ligase.